Consider the following 332-residue polypeptide: C4-dicarboxylate-binding periplasmic protein DctP (332 aa).

An N-terminal signal peptide occupies residues 1–22 (MFKPLTLIAASILAVTSFNAAA).

Belongs to the bacterial solute-binding protein 7 family. The complex comprises the extracytoplasmic solute receptor protein DctP, and the two transmembrane proteins DctQ and DctM.

Its subcellular location is the periplasm. Part of the tripartite ATP-independent periplasmic (TRAP) transport system DctPQM involved in C4-dicarboxylates uptake. This chain is C4-dicarboxylate-binding periplasmic protein DctP, found in Vibrio cholerae serotype O1 (strain ATCC 39315 / El Tor Inaba N16961).